The sequence spans 169 residues: Neurotensin/neuromedin N (169 aa).

Residues Met1 to Cys22 form the signal peptide.

This sequence belongs to the neurotensin family. As to quaternary structure, interacts with NTSR1. Interacts with SORT1. Interacts with SORL1. Neurotensin is cleaved and degraded by Angiotensin-converting enzyme (ACE) and neprilysin (MME).

The protein resides in the secreted. It is found in the cytoplasmic vesicle. It localises to the secretory vesicle. In terms of biological role, neurotensin may play an endocrine or paracrine role in the regulation of fat metabolism. It causes contraction of smooth muscle. The chain is Neurotensin/neuromedin N (Nts) from Rattus norvegicus (Rat).